A 359-amino-acid chain; its full sequence is Guanine nucleotide-binding protein subunit alpha-11 (359 aa).

2 S-palmitoyl cysteine lipidation sites follow: Cys-9 and Cys-10. Positions 38–359 (RELKLLLLGT…QLNLKEYNLV (322 aa)) constitute a G-alpha domain. The interval 41-54 (KLLLLGTGESGKST) is G1 motif. GTP contacts are provided by residues 46–53 (GTGESGKS) and 180–183 (LRVR). A Mg(2+)-binding site is contributed by Ser-53. The G2 motif stretch occupies residues 178–186 (DVLRVRVPT). Thr-186 contacts Mg(2+). Positions 201-210 (FRMVDVGGQR) are G3 motif. The tract at residues 270–277 (ILFLNKKD) is G4 motif. GTP-binding positions include 274–277 (NKKD) and Ala-331. The G5 motif stretch occupies residues 329 to 334 (TCATDT).

Belongs to the G-alpha family. G(q) subfamily. In terms of assembly, g proteins are composed of 3 units; alpha, beta and gamma. The alpha chain contains the guanine nucleotide binding site. Interacts with RGS22. Interacts with NTSR1.

Its subcellular location is the cell membrane. It localises to the cytoplasm. It carries out the reaction GTP + H2O = GDP + phosphate + H(+). Functionally, guanine nucleotide-binding proteins (G proteins) function as transducers downstream of G protein-coupled receptors (GPCRs) in numerous signaling cascades. The alpha chain contains the guanine nucleotide binding site and alternates between an active, GTP-bound state and an inactive, GDP-bound state. Signaling by an activated GPCR promotes GDP release and GTP binding. The alpha subunit has a low GTPase activity that converts bound GTP to GDP, thereby terminating the signal. Both GDP release and GTP hydrolysis are modulated by numerous regulatory proteins. Signaling is mediated via phospholipase C-beta-dependent inositol lipid hydrolysis for signal propagation: activates phospholipase C-beta: following GPCR activation, GNA11 activates PLC-beta (PLCB1, PLCB2, PLCB3 or PLCB4), leading to production of diacylglycerol (DAG) and inositol 1,4,5-trisphosphate (IP3). Transduces FFAR4 signaling in response to long-chain fatty acids (LCFAs). Together with GNAQ, required for heart development. In the respiratory epithelium, transmits OXGR1-dependent signals that lead to downstream intracellular Ca(2+) release and mucocilliary clearance of airborne pathogens. The polypeptide is Guanine nucleotide-binding protein subunit alpha-11 (GNA11) (Sus scrofa (Pig)).